The sequence spans 546 residues: CTP synthase (546 aa).

The segment at 1-266 (MARYIFITGG…DTEVLDVFGL (266 aa)) is amidoligase domain. A CTP-binding site is contributed by serine 13. Residue serine 13 participates in UTP binding. 14 to 19 (SLGKGL) contacts ATP. Tyrosine 54 is an L-glutamine binding site. Aspartate 71 is a binding site for ATP. Aspartate 71 and glutamate 140 together coordinate Mg(2+). CTP is bound by residues 147 to 149 (DIE), 187 to 192 (KTKPTQ), and lysine 223. UTP is bound by residues 187-192 (KTKPTQ) and lysine 223. One can recognise a Glutamine amidotransferase type-1 domain in the interval 293-545 (NIAIVGKYTG…IGAAKERSRL (253 aa)). Alanine 357 contributes to the L-glutamine binding site. The active-site Nucleophile; for glutamine hydrolysis is the cysteine 384. L-glutamine-binding positions include 385–388 (FGMQ), glutamate 408, and arginine 473. Residues histidine 518 and glutamate 520 contribute to the active site.

It belongs to the CTP synthase family. In terms of assembly, homotetramer.

The catalysed reaction is UTP + L-glutamine + ATP + H2O = CTP + L-glutamate + ADP + phosphate + 2 H(+). It carries out the reaction L-glutamine + H2O = L-glutamate + NH4(+). It catalyses the reaction UTP + NH4(+) + ATP = CTP + ADP + phosphate + 2 H(+). Its pathway is pyrimidine metabolism; CTP biosynthesis via de novo pathway; CTP from UDP: step 2/2. Its activity is regulated as follows. Allosterically activated by GTP, when glutamine is the substrate; GTP has no effect on the reaction when ammonia is the substrate. The allosteric effector GTP functions by stabilizing the protein conformation that binds the tetrahedral intermediate(s) formed during glutamine hydrolysis. Inhibited by the product CTP, via allosteric rather than competitive inhibition. Catalyzes the ATP-dependent amination of UTP to CTP with either L-glutamine or ammonia as the source of nitrogen. Regulates intracellular CTP levels through interactions with the four ribonucleotide triphosphates. The polypeptide is CTP synthase (Phenylobacterium zucineum (strain HLK1)).